A 1196-amino-acid chain; its full sequence is DNA-directed RNA polymerase I subunit RPA2 (1196 aa).

Residues 1097-1124 form a C4-type zinc finger; that stretch reads CRECGSILTTQSSVPKIGSMVTIRCRRC.

Belongs to the RNA polymerase beta chain family. Component of the RNA polymerase I (Pol I) complex consisting of 14 subunits.

It is found in the nucleus. The protein resides in the nucleolus. The enzyme catalyses RNA(n) + a ribonucleoside 5'-triphosphate = RNA(n+1) + diphosphate. In terms of biological role, DNA-dependent RNA polymerase catalyzes the transcription of DNA into RNA using the four ribonucleoside triphosphates as substrates. Second largest core component of RNA polymerase I which synthesizes ribosomal RNA precursors. Proposed to contribute to the polymerase catalytic activity and forms the polymerase active center together with the largest subunit. Pol I is composed of mobile elements and RPA2 is part of the core element with the central large cleft and probably a clamp element that moves to open and close the cleft. In Eremothecium gossypii (strain ATCC 10895 / CBS 109.51 / FGSC 9923 / NRRL Y-1056) (Yeast), this protein is DNA-directed RNA polymerase I subunit RPA2 (RPA2).